The following is a 961-amino-acid chain: Glycine dehydrogenase (decarboxylating) (961 aa).

Residue Lys709 is modified to N6-(pyridoxal phosphate)lysine.

It belongs to the GcvP family. The glycine cleavage system is composed of four proteins: P, T, L and H. Requires pyridoxal 5'-phosphate as cofactor.

The catalysed reaction is N(6)-[(R)-lipoyl]-L-lysyl-[glycine-cleavage complex H protein] + glycine + H(+) = N(6)-[(R)-S(8)-aminomethyldihydrolipoyl]-L-lysyl-[glycine-cleavage complex H protein] + CO2. Its function is as follows. The glycine cleavage system catalyzes the degradation of glycine. The P protein binds the alpha-amino group of glycine through its pyridoxal phosphate cofactor; CO(2) is released and the remaining methylamine moiety is then transferred to the lipoamide cofactor of the H protein. The chain is Glycine dehydrogenase (decarboxylating) from Streptomyces avermitilis (strain ATCC 31267 / DSM 46492 / JCM 5070 / NBRC 14893 / NCIMB 12804 / NRRL 8165 / MA-4680).